Consider the following 150-residue polypeptide: UPF0098 protein CT_736 (150 aa).

The protein belongs to the UPF0098 family.

In Chlamydia trachomatis serovar D (strain ATCC VR-885 / DSM 19411 / UW-3/Cx), this protein is UPF0098 protein CT_736.